Consider the following 404-residue polypeptide: Cysteine desulfurase IscS (404 aa).

Pyridoxal 5'-phosphate is bound by residues 75 to 76, Asn155, Gln183, and 203 to 205; these read AT and SSH. At Lys206 the chain carries N6-(pyridoxal phosphate)lysine. Pyridoxal 5'-phosphate is bound at residue Thr243. The active-site Cysteine persulfide intermediate is the Cys328. [2Fe-2S] cluster is bound at residue Cys328.

This sequence belongs to the class-V pyridoxal-phosphate-dependent aminotransferase family. NifS/IscS subfamily. In terms of assembly, homodimer. Forms a heterotetramer with IscU, interacts with other sulfur acceptors. Pyridoxal 5'-phosphate is required as a cofactor.

It is found in the cytoplasm. It catalyses the reaction (sulfur carrier)-H + L-cysteine = (sulfur carrier)-SH + L-alanine. Its pathway is cofactor biosynthesis; iron-sulfur cluster biosynthesis. Its function is as follows. Master enzyme that delivers sulfur to a number of partners involved in Fe-S cluster assembly, tRNA modification or cofactor biosynthesis. Catalyzes the removal of elemental sulfur atoms from cysteine to produce alanine. Functions as a sulfur delivery protein for Fe-S cluster synthesis onto IscU, an Fe-S scaffold assembly protein, as well as other S acceptor proteins. In Pasteurella multocida (strain Pm70), this protein is Cysteine desulfurase IscS.